The following is a 242-amino-acid chain: Fibrinolytic enzyme, isozyme C (242 aa).

The region spanning 1-242 (VIGGTNASPG…YLGWIGDNSR (242 aa)) is the Peptidase S1 domain. An intrachain disulfide couples cysteine 29 to cysteine 45. Residues histidine 44 and aspartate 93 each act as charge relay system in the active site. 3 disulfides stabilise this stretch: cysteine 127-cysteine 197, cysteine 158-cysteine 176, and cysteine 187-cysteine 219. Residue serine 191 is the Charge relay system of the active site.

The protein belongs to the peptidase S1 family.

The protein is Fibrinolytic enzyme, isozyme C of Lumbricus rubellus (Humus earthworm).